Consider the following 61-residue polypeptide: LPVAFLKFAIVLILFIAMSAMIEAQCIGNGGRCNENVGPPYCCSGFCLRQPGQGYGYCKNR.

Residues 1-24 (LPVAFLKFAIVLILFIAMSAMIEA) form the signal peptide. Q25 carries the post-translational modification Pyrrolidone carboxylic acid. Intrachain disulfides connect C26-C43, C33-C47, and C42-C58.

This sequence belongs to the AMP family. In terms of assembly, homodimer. Three disulfide bonds are present. As to expression, found only in seeds.

It localises to the secreted. Functionally, possesses antifungal activity and is also active on two tested Gram-positive bacteria but is non-toxic for Gram-negative bacteria and cultured human cells. The sequence is that of Antimicrobial peptide 1 (AMP1) from Mirabilis jalapa (Garden four-o'clock).